We begin with the raw amino-acid sequence, 294 residues long: Protease HtpX homolog 2 (294 aa).

2 helical membrane passes run 15 to 35 (MLFTMFLLAAVYLFFLAFLSY) and 37 to 57 (GTPPVFMLLFVGAFMGIQYFY). Residue His140 participates in Zn(2+) binding. The active site involves Glu141. His144 is a Zn(2+) binding site. Transmembrane regions (helical) follow at residues 151–171 (AVLTIASFISTIAFYIVRYSL) and 185–205 (GGILLVWLVSIAVWVVSFLLI). Glu213 serves as a coordination point for Zn(2+).

It belongs to the peptidase M48B family. The cofactor is Zn(2+).

It is found in the cell membrane. In Methanosarcina acetivorans (strain ATCC 35395 / DSM 2834 / JCM 12185 / C2A), this protein is Protease HtpX homolog 2.